The sequence spans 227 residues: NADH-quinone oxidoreductase subunit C (227 aa).

The protein belongs to the complex I 30 kDa subunit family. As to quaternary structure, NDH-1 is composed of 14 different subunits. Subunits NuoB, C, D, E, F, and G constitute the peripheral sector of the complex.

Its subcellular location is the cell inner membrane. It catalyses the reaction a quinone + NADH + 5 H(+)(in) = a quinol + NAD(+) + 4 H(+)(out). Its function is as follows. NDH-1 shuttles electrons from NADH, via FMN and iron-sulfur (Fe-S) centers, to quinones in the respiratory chain. The immediate electron acceptor for the enzyme in this species is believed to be ubiquinone. Couples the redox reaction to proton translocation (for every two electrons transferred, four hydrogen ions are translocated across the cytoplasmic membrane), and thus conserves the redox energy in a proton gradient. This chain is NADH-quinone oxidoreductase subunit C, found in Legionella pneumophila subsp. pneumophila (strain Philadelphia 1 / ATCC 33152 / DSM 7513).